Here is a 1271-residue protein sequence, read N- to C-terminus: Diacylglycerol kinase kappa (1271 aa).

A compositionally biased stretch (low complexity) spans 1–15; the sequence is MDRGAAAAQGTAPPQ. The disordered stretch occupies residues 1 to 160; that stretch reads MDRGAAAAQG…PEPTPEPVTE (160 aa). The span at 23-44 shows a compositional bias: pro residues; sequence SPEPPPPWPPPPPPPAPPPAPP. 33 repeat units span residues 48–51, 52–55, 56–59, 60–63, 64–67, 68–71, 72–75, 76–79, 80–83, 84–87, 88–91, 92–95, 96–99, 100–103, 104–107, 108–111, 112–115, 116–119, 120–123, 124–127, 128–131, 132–135, 136–139, 140–143, 144–147, 148–151, 152–155, 156–159, 160–163, 164–167, 168–171, 172–175, and 176–179. Residues 48-179 form a 33 X 4 AA approximate tandem repeats of E-P-A-P region; it reads EASPEPIPEP…APEFRPSPAP (132 aa). The segment covering 52–66 has biased composition (pro residues); that stretch reads EPIPEPCPELAPGPC. Tyr78 carries the post-translational modification Phosphotyrosine. Positions 82 to 116 are enriched in pro residues; the sequence is TPEPATEPASEPAPEPATEPAPEPATEPAPEPAPE. Residues 139–149 show a composition bias toward low complexity; sequence PELTPEVAPEL. The disordered stretch occupies residues 190–209; that stretch reads ERGLKTSPSPSPSPSPRTPM. In terms of domain architecture, PH spans 216–309; the sequence is KILKEGPMLK…WINIIKTIQQ (94 aa). 2 consecutive Phorbol-ester/DAG-type zinc fingers follow at residues 327-377 and 398-449; these read MHCW…SKDC and PHQW…SKEC. Residues 487-622 enclose the DAGKc domain; the sequence is ACSCPLLIFI…LDRWSVMIRE (136 aa). 2 disordered regions span residues 805–825 and 1252–1271; these read DDPE…GTLS and RHRE…RSQL. A required for localization to the plasma membrane region spans residues 1199–1268; it reads PIFVPEEKSS…EGDDPLTPSR (70 aa).

This sequence belongs to the eukaryotic diacylglycerol kinase family. In terms of assembly, does not form homooligomers. Post-translationally, phosphorylated at Tyr-78 by some member of the SRC family in response to H(2)O(2). In terms of tissue distribution, expressed in testis, and to a lesser extent in placenta.

The protein resides in the cell membrane. It catalyses the reaction a 1,2-diacyl-sn-glycerol + ATP = a 1,2-diacyl-sn-glycero-3-phosphate + ADP + H(+). The enzyme catalyses 1,2-di-(9Z-octadecenoyl)-sn-glycerol + ATP = 1,2-di-(9Z-octadecenoyl)-sn-glycero-3-phosphate + ADP + H(+). It participates in lipid metabolism; glycerolipid metabolism. With respect to regulation, inhibited in response to H(2)O(2). Diacylglycerol kinase that converts diacylglycerol/DAG into phosphatidic acid/phosphatidate/PA and regulates the respective levels of these two bioactive lipids. Thereby, acts as a central switch between the signaling pathways activated by these second messengers with different cellular targets and opposite effects in numerous biological processes. The protein is Diacylglycerol kinase kappa of Homo sapiens (Human).